The chain runs to 72 residues: Translation initiation factor IF-1 (72 aa).

The S1-like domain maps to 1–72 (MAKQSAIEKD…SKGRIAFRYK (72 aa)).

The protein belongs to the IF-1 family. Component of the 30S ribosomal translation pre-initiation complex which assembles on the 30S ribosome in the order IF-2 and IF-3, IF-1 and N-formylmethionyl-tRNA(fMet); mRNA recruitment can occur at any time during PIC assembly.

It is found in the cytoplasm. Its function is as follows. One of the essential components for the initiation of protein synthesis. Stabilizes the binding of IF-2 and IF-3 on the 30S subunit to which N-formylmethionyl-tRNA(fMet) subsequently binds. Helps modulate mRNA selection, yielding the 30S pre-initiation complex (PIC). Upon addition of the 50S ribosomal subunit IF-1, IF-2 and IF-3 are released leaving the mature 70S translation initiation complex. This chain is Translation initiation factor IF-1, found in Parabacteroides distasonis (strain ATCC 8503 / DSM 20701 / CIP 104284 / JCM 5825 / NCTC 11152).